Reading from the N-terminus, the 444-residue chain is UDP-N-acetylmuramate--L-alanine ligase (444 aa).

110–116 provides a ligand contact to ATP; the sequence is GAHGKTS.

Belongs to the MurCDEF family.

It localises to the cytoplasm. It carries out the reaction UDP-N-acetyl-alpha-D-muramate + L-alanine + ATP = UDP-N-acetyl-alpha-D-muramoyl-L-alanine + ADP + phosphate + H(+). It participates in cell wall biogenesis; peptidoglycan biosynthesis. Functionally, cell wall formation. This chain is UDP-N-acetylmuramate--L-alanine ligase, found in Streptococcus pneumoniae (strain CGSP14).